Consider the following 323-residue polypeptide: uncharacterized protein (323 aa).

The first 45 residues, 1 to 45 (MLATLSQIRAWSTEHLIDAAGYWTETADRWEDVFLQMRNQAHAIA), serve as a signal peptide directing secretion. A disordered region spans residues 186–227 (FKQDGPTPPPPGAPHPSGGADGPYSDPITSMMLPPAGTEAPV). A run of 2 helical transmembrane segments spans residues 269-289 (SAEW…VVGT) and 290-310 (ALAI…LLGV).

Its subcellular location is the cell membrane. This is an uncharacterized protein from Mycobacterium tuberculosis (strain CDC 1551 / Oshkosh).